The sequence spans 561 residues: Lengsin (561 aa).

Disordered stretches follow at residues Met-1–Ala-78 and Ser-91–Asn-112. Residues Asn-26 to Lys-37 are compositionally biased toward basic residues. Polar residues predominate over residues Met-50–Asp-63. Positions Asn-135–Gly-229 constitute a GS beta-grasp domain. The region spanning Pro-236 to Ile-561 is the GS catalytic domain.

It belongs to the glutamine synthetase family. Dodecamer. Interacts with BFSP2 and VIM. In terms of tissue distribution, expressed in lens.

Functionally, may act as a component of the cytoskeleton or as a chaperone for the reorganization of intermediate filament proteins during terminal differentiation in the lens. Does not seem to have enzymatic activity. This is Lengsin (Lgsn) from Rattus norvegicus (Rat).